Here is a 276-residue protein sequence, read N- to C-terminus: MELGLILMFASAFVSAKDRELEEFVEKDIKVFFSSYPAQVLGMEEDQGVLVSHSKYVNPSKYKFVTRARLVKSGERYVVIFGENNICKEGNSVVKCKEERPWDIDRKEFGYTISTDNKCITKGPDESIEMKPCVNTDDQIFGFKLADLGGCGSVESLLGSEKPKSTTTNVNIFQPESECLPSVMIKADGDVEKIEENDVHVLHKEGAHTHVIEEAGHPLYEESAPSKRRVVVSHRTKRSHLPGTRRTYLGHHHFPHHHLPHHYRNRTLFERKPVVF.

The N-terminal stretch at 1-16 (MELGLILMFASAFVSA) is a signal peptide. Asn-265 carries N-linked (GlcNAc...) asparagine glycosylation.

This is an uncharacterized protein from Encephalitozoon cuniculi (strain GB-M1) (Microsporidian parasite).